A 342-amino-acid polypeptide reads, in one-letter code: UDP-3-O-acylglucosamine N-acyltransferase (342 aa).

His-238 functions as the Proton acceptor in the catalytic mechanism.

It belongs to the transferase hexapeptide repeat family. LpxD subfamily. As to quaternary structure, homotrimer.

The catalysed reaction is a UDP-3-O-[(3R)-3-hydroxyacyl]-alpha-D-glucosamine + a (3R)-hydroxyacyl-[ACP] = a UDP-2-N,3-O-bis[(3R)-3-hydroxyacyl]-alpha-D-glucosamine + holo-[ACP] + H(+). Its pathway is bacterial outer membrane biogenesis; LPS lipid A biosynthesis. Its function is as follows. Catalyzes the N-acylation of UDP-3-O-acylglucosamine using 3-hydroxyacyl-ACP as the acyl donor. Is involved in the biosynthesis of lipid A, a phosphorylated glycolipid that anchors the lipopolysaccharide to the outer membrane of the cell. In Tolumonas auensis (strain DSM 9187 / NBRC 110442 / TA 4), this protein is UDP-3-O-acylglucosamine N-acyltransferase.